The sequence spans 213 residues: Uracil phosphoribosyltransferase (213 aa).

5-phospho-alpha-D-ribose 1-diphosphate-binding positions include Arg78, Arg103, and 131–139 (DPMLATGGT). Uracil contacts are provided by residues Ile197 and 202 to 204 (GDA). A 5-phospho-alpha-D-ribose 1-diphosphate-binding site is contributed by Asp203.

Belongs to the UPRTase family. Mg(2+) serves as cofactor.

The catalysed reaction is UMP + diphosphate = 5-phospho-alpha-D-ribose 1-diphosphate + uracil. Its pathway is pyrimidine metabolism; UMP biosynthesis via salvage pathway; UMP from uracil: step 1/1. Its activity is regulated as follows. Allosterically activated by GTP. Functionally, catalyzes the conversion of uracil and 5-phospho-alpha-D-ribose 1-diphosphate (PRPP) to UMP and diphosphate. In Bifidobacterium longum subsp. infantis (strain ATCC 15697 / DSM 20088 / JCM 1222 / NCTC 11817 / S12), this protein is Uracil phosphoribosyltransferase.